The primary structure comprises 265 residues: Catechol O-methyltransferase (265 aa).

Residues 1–2 are Cytoplasmic-facing; the sequence is ML. The helical; Signal-anchor for type II membrane protein transmembrane segment at 3 to 19 threads the bilayer; that stretch reads LAAVSLGLLLLAFLLLL. The Extracellular portion of the chain corresponds to 20-265; the sequence is RHLGWGLVAI…QGPGSSPVKS (246 aa). S-adenosyl-L-methionine contacts are provided by residues Val85, Glu107, Ser115, Glu133, Ile134, 160–163, Ser162, and Asp184; that span reads GASQ. Asp184 provides a ligand contact to Mg(2+). Residue Lys187 coordinates substrate. Mg(2+)-binding residues include Asp212 and Asn213. Substrate contacts are provided by Asn213 and Glu242. Ser260, Ser261, and Ser265 each carry phosphoserine.

This sequence belongs to the class I-like SAM-binding methyltransferase superfamily. Cation-dependent O-methyltransferase family. Requires Mg(2+) as cofactor.

Its subcellular location is the cytoplasm. The protein localises to the cell membrane. It catalyses the reaction a catechol + S-adenosyl-L-methionine = a guaiacol + S-adenosyl-L-homocysteine + H(+). The catalysed reaction is 2-hydroxyestrone + S-adenosyl-L-methionine = 2-hydroxy-3-methoxy-estrone + S-adenosyl-L-homocysteine + H(+). It carries out the reaction 4-hydroxyestrone + S-adenosyl-L-methionine = 4-methoxyestrone + S-adenosyl-L-homocysteine + H(+). The enzyme catalyses 2-hydroxyestrone + S-adenosyl-L-methionine = 2-methoxyestrone + S-adenosyl-L-homocysteine + H(+). It catalyses the reaction 4-hydroxy-17beta-estradiol + S-adenosyl-L-methionine = 4-methoxy-17beta-estradiol + S-adenosyl-L-homocysteine + H(+). The catalysed reaction is 2-hydroxy-17beta-estradiol + S-adenosyl-L-methionine = 2-hydroxy-3-methoxy-17beta-estradiol + S-adenosyl-L-homocysteine + H(+). It carries out the reaction 2-hydroxy-17beta-estradiol + S-adenosyl-L-methionine = 2-methoxy-17beta-estradiol + S-adenosyl-L-homocysteine + H(+). Its function is as follows. Catalyzes the O-methylation, and thereby the inactivation, of catecholamine neurotransmitters and catechol hormones. Also shortens the biological half-lives of certain neuroactive drugs, like L-DOPA, alpha-methyl DOPA and isoproterenol. In Mus musculus (Mouse), this protein is Catechol O-methyltransferase.